Consider the following 577-residue polypeptide: Nuclear receptor subfamily 4 group A member 1 (577 aa).

The segment at residues 243 to 318 (EGRCAVCGDN…VGMVKEVVRT (76 aa)) is a DNA-binding region (nuclear receptor). 2 consecutive NR C4-type zinc fingers follow at residues 246-266 (CAVCGDNASCQHYGVRTCEGC) and 282-311 (CLANKDCPVDKRRRNRCQFCRFQKCLVVGM). Residues 247–333 (AVCGDNASCQ…RRGRLPSKPK (87 aa)) form a required for binding NBRE-containing DNA region. Positions 339-574 (SPVDLINSLV…PIVDKIFMDT (236 aa)) constitute an NR LBD domain. Residues 500–523 (PKKVEELQSQIINCLKEHIPSSMN) form a may bind lipopolysaccharide region. The interval 563 to 574 (PPPIVDKIFMDT) is AF-2.

Belongs to the nuclear hormone receptor family. NR4 subfamily. Zn(2+) is required as a cofactor.

The protein resides in the nucleus. Its subcellular location is the cytoplasm. The protein localises to the cytosol. In terms of biological role, orphan nuclear receptor. Binds the NGFI-B response element (NBRE) 5'-AAAAGGTCA-3'. In the cytosol, may detect bacterial lipopolysaccharide (LPS) and NBRE-containing mitochondrial DNA released during pyroptosis, and play a role in non-canonical inflammasome activation. The protein is Nuclear receptor subfamily 4 group A member 1 (nr4a1) of Xenopus laevis (African clawed frog).